Reading from the N-terminus, the 599-residue chain is ATP-binding cassette sub-family E member 1 (599 aa).

2 consecutive 4Fe-4S ferredoxin-type domains span residues 7–37 and 46–75; these read RIAI…MGKL and KIAW…IVNL. A Glycyl lysine isopeptide (Lys-Gly) (interchain with G-Cter in ubiquitin) cross-link involves residue K20. ABC transporter domains follow at residues 79-315 and 342-562; these read LEKE…FLDG and VKKM…LSQL. Residues 110-117 and 379-386 each bind ATP; these read GTNGIGKS and GENGTGKT. A Phosphoserine modification is found at S417. The residue at position 550 (T550) is a Phosphothreonine.

It belongs to the ABC transporter superfamily. ABCE family. In terms of assembly, (Microbial infection) Interacts with Chandipura virus matrix protein. As to quaternary structure, interacts with PINK1. Interacts with CNOT4. Interacts with PELO. Probably heterodimerizes with RNASEL; this interaction inhibits RNASEL. (Microbial infection) Interacts with HIV-1 proteins Vif and Gag. In terms of assembly, (Microbial infection) Interacts with HIV-2 protein Gag. Ubiquitinated by CNOT4. Ubiquitination mediates the recruitment of autophagy receptors to the mitochondrial outer membrane and initiates mitophagy.

It is found in the cytoplasm. Its subcellular location is the mitochondrion. The catalysed reaction is GTP + H2O = GDP + phosphate + H(+). It catalyses the reaction ATP + H2O = ADP + phosphate + H(+). The enzyme catalyses CTP + H2O = CDP + phosphate + H(+). It carries out the reaction UTP + H2O = UDP + phosphate + H(+). In terms of biological role, nucleoside-triphosphatase (NTPase) involved in ribosome recycling by mediating ribosome disassembly. Able to hydrolyze ATP, GTP, UTP and CTP. Splits ribosomes into free 60S subunits and tRNA- and mRNA-bound 40S subunits. Acts either after canonical termination facilitated by release factors (ETF1/eRF1) or after recognition of stalled and vacant ribosomes by mRNA surveillance factors (PELO/Pelota). Involved in the No-Go Decay (NGD) pathway: recruited to stalled ribosomes by the Pelota-HBS1L complex, and drives the disassembly of stalled ribosomes, followed by degradation of damaged mRNAs as part of the NGD pathway. Also plays a role in quality control of translation of mitochondrial outer membrane-localized mRNA. As part of the PINK1-regulated signaling, ubiquitinated by CNOT4 upon mitochondria damage; this modification generates polyubiquitin signals that recruit autophagy receptors to the mitochondrial outer membrane and initiate mitophagy. RNASEL-specific protein inhibitor which antagonizes the binding of 2-5A (5'-phosphorylated 2',5'-linked oligoadenylates) to RNASEL. Negative regulator of the anti-viral effect of the interferon-regulated 2-5A/RNASEL pathway. (Microbial infection) May act as a chaperone for post-translational events during HIV-1 capsid assembly. Functionally, (Microbial infection) Plays a role in the down-regulation of the 2-5A/RNASEL pathway during encephalomyocarditis virus (EMCV) and HIV-1 infections. This is ATP-binding cassette sub-family E member 1 (ABCE1) from Homo sapiens (Human).